We begin with the raw amino-acid sequence, 643 residues long: MSGGPAVRVSIESSCERQVQEVSLDGMETYVPPLSMSQNLAKLVQRIDFCQSSDSEEDGAERARAGREQWKQEPEEDEGQLKFQPSLWPWDSVRNNLRSALTEMCVLHDVLSVLKERKYMTLDPVSQDPAMAKTPQVFQLISKKKSLGTAAQLLLKGAEKLSKSVSENQEQRRQRDFNSELLRLRSQWKLRKVGDKILGDLSYRSAGSLFPHHGTFEVIKNTDIDLDKKIPDDYCPLNVQIPSDLEGSAYIKVSIQKQSPDIGDLGTVNLFRRQAKAKPASQMWHSRLEAAQNVLLCKEIFAQLSREAVQIKSQIPHIVVKNQIISQPFPGLQLSISLCHSTGEKKSQRSSPDKSKPDDHLYVLEHNLHQLIREFHKQTLSSVVMPHPASAPFGHKRLRLAGPLAYDKAEISSLQQTEGLLEKIIKQAKHIFLRSRTARTIDSLASRIEDPQIQAHWSNINDVYESSVKVLITSQGYEQICKSIQLQLNICVEQIRVVHRDGRVITLSHQEQELQDFLLSQMSQHQVHAVQQLAKVMGWHVLSFSNHVGLGSIESIGNASSITVASPSGEYAISVRNGPESGCKVLVQFPRSQAKDAGRSDAVQDGKWTQLRGAHREVHWDRMEGKNFVYKMELLMAALTPCP.

The interval 53 to 82 (SDSEEDGAERARAGREQWKQEPEEDEGQLK) is disordered. Over residues 60 to 73 (AERARAGREQWKQE) the composition is skewed to basic and acidic residues.

This sequence belongs to the Mediator complex subunit 17 family. As to quaternary structure, component of the Mediator complex.

The protein resides in the nucleus. Its function is as follows. Component of the Mediator complex, a coactivator involved in the regulated transcription of nearly all RNA polymerase II-dependent genes. Mediator functions as a bridge to convey information from gene-specific regulatory proteins to the basal RNA polymerase II transcription machinery. Mediator is recruited to promoters by direct interactions with regulatory proteins and serves as a scaffold for the assembly of a functional preinitiation complex with RNA polymerase II and the general transcription factors. The sequence is that of Mediator of RNA polymerase II transcription subunit 17 (med17) from Danio rerio (Zebrafish).